The primary structure comprises 284 residues: Bifunctional protein FolD (284 aa).

Residues 166–168 (GAS) and isoleucine 232 contribute to the NADP(+) site.

It belongs to the tetrahydrofolate dehydrogenase/cyclohydrolase family. In terms of assembly, homodimer.

It catalyses the reaction (6R)-5,10-methylene-5,6,7,8-tetrahydrofolate + NADP(+) = (6R)-5,10-methenyltetrahydrofolate + NADPH. It carries out the reaction (6R)-5,10-methenyltetrahydrofolate + H2O = (6R)-10-formyltetrahydrofolate + H(+). Its pathway is one-carbon metabolism; tetrahydrofolate interconversion. Catalyzes the oxidation of 5,10-methylenetetrahydrofolate to 5,10-methenyltetrahydrofolate and then the hydrolysis of 5,10-methenyltetrahydrofolate to 10-formyltetrahydrofolate. The sequence is that of Bifunctional protein FolD from Shewanella baltica (strain OS195).